Here is a 91-residue protein sequence, read N- to C-terminus: MFQKQERIGLVVYLYYNRDARKLSKFGDLYYHSKRSRYLIVYINKNDLDTKLEEMRRLKCVKDIRPSAFDDIDRQFVGNLHRDETNNHQKG.

Belongs to the UPF0298 family.

The protein resides in the cytoplasm. In Streptococcus pyogenes serotype M28 (strain MGAS6180), this protein is UPF0298 protein M28_Spy0318.